We begin with the raw amino-acid sequence, 329 residues long: (12E)-labda-8(17),12,14-triene synthase (329 aa).

The Mg(2+) site is built by Asp-90 and Glu-95. Positions 90-95 match the DDXXXE motif motif; the sequence is DDMHGE. Arg-184 is a substrate binding site. Residues Asn-230 and Ser-234 each contribute to the Mg(2+) site. Positions 230 to 238 match the NXXXSXXXE motif motif; it reads NDLASYERE. Arg-237 is a binding site for substrate. Glu-238 provides a ligand contact to Mg(2+). A substrate-binding site is contributed by 316 to 317; it reads RY.

The protein belongs to the terpene synthase family. The cofactor is Mg(2+).

It carries out the reaction (+)-copalyl diphosphate = (12E)-labda-8(17),12,14-triene + diphosphate. Involved in the biosynthesis of the mercapturic acid derivative diterpene cyslabdan A, a potentiator of the beta-lactam antibiotic imipenem. Catalyzes the conversion of (+)-copalyl diphosphate to yield labda-8(17),12(E),14-triene (biformene). The chain is (12E)-labda-8(17),12,14-triene synthase from Streptomyces cyslabdanicus.